Reading from the N-terminus, the 217-residue chain is Probable transaldolase (217 aa).

Lys83 (schiff-base intermediate with substrate) is an active-site residue.

This sequence belongs to the transaldolase family. Type 3B subfamily.

The protein resides in the cytoplasm. It catalyses the reaction D-sedoheptulose 7-phosphate + D-glyceraldehyde 3-phosphate = D-erythrose 4-phosphate + beta-D-fructose 6-phosphate. Its pathway is carbohydrate degradation; pentose phosphate pathway; D-glyceraldehyde 3-phosphate and beta-D-fructose 6-phosphate from D-ribose 5-phosphate and D-xylulose 5-phosphate (non-oxidative stage): step 2/3. Its function is as follows. Transaldolase is important for the balance of metabolites in the pentose-phosphate pathway. In Paracoccus denitrificans (strain Pd 1222), this protein is Probable transaldolase.